Here is a 692-residue protein sequence, read N- to C-terminus: Elongation factor G (692 aa).

Residues 8 to 282 form the tr-type G domain; it reads EKTRNIGIMA…AVLDYLPAPT (275 aa). Residues 17–24, 81–85, and 135–138 contribute to the GTP site; these read AHIDAGKT, DTPGH, and NKMD. A phosphoserine mark is found at serine 213, serine 302, serine 569, and serine 680.

Belongs to the TRAFAC class translation factor GTPase superfamily. Classic translation factor GTPase family. EF-G/EF-2 subfamily. Phosphorylated on threonine residue(s). Phosphorylated by PrkC and dephosphorylated by PrpC, in vitro.

Its subcellular location is the cytoplasm. Functionally, catalyzes the GTP-dependent ribosomal translocation step during translation elongation. During this step, the ribosome changes from the pre-translocational (PRE) to the post-translocational (POST) state as the newly formed A-site-bound peptidyl-tRNA and P-site-bound deacylated tRNA move to the P and E sites, respectively. Catalyzes the coordinated movement of the two tRNA molecules, the mRNA and conformational changes in the ribosome. This chain is Elongation factor G (fusA), found in Bacillus subtilis (strain 168).